A 518-amino-acid chain; its full sequence is Cytochrome P450 704C1 (518 aa).

2 helical membrane-spanning segments follow: residues 5–25 (ILTMFVTVSALALACSLWIAS) and 299–319 (VILNFMVAARDTTAIALSWFI). Position 461 (cysteine 461) interacts with heme.

The protein belongs to the cytochrome P450 family. The cofactor is heme.

It localises to the membrane. The chain is Cytochrome P450 704C1 (CYP704C1) from Pinus taeda (Loblolly pine).